A 77-amino-acid polypeptide reads, in one-letter code: U18-lycotoxin-Ls1a (77 aa).

A signal peptide spans 1-22 (MSPKMQALLLLLGLITLLVVHA). Positions 23-34 (EEELSENTESER) are excised as a propeptide. 4 cysteine pairs are disulfide-bonded: cysteine 36–cysteine 51, cysteine 43–cysteine 56, cysteine 50–cysteine 67, and cysteine 58–cysteine 65.

It belongs to the neurotoxin 02 (plectoxin) family. In terms of tissue distribution, expressed by the venom gland.

It localises to the secreted. The polypeptide is U18-lycotoxin-Ls1a (Lycosa singoriensis (Wolf spider)).